The primary structure comprises 39 residues: Photosystem II reaction center protein L (39 aa).

A helical membrane pass occupies residues 18-38 (SLYWGLLLIFVLAVLFSNYFF).

This sequence belongs to the PsbL family. PSII is composed of 1 copy each of membrane proteins PsbA, PsbB, PsbC, PsbD, PsbE, PsbF, PsbH, PsbI, PsbJ, PsbK, PsbL, PsbM, PsbT, PsbX, PsbY, PsbZ, Psb30/Ycf12, at least 3 peripheral proteins of the oxygen-evolving complex and a large number of cofactors. It forms dimeric complexes.

It is found in the plastid thylakoid membrane. Functionally, one of the components of the core complex of photosystem II (PSII). PSII is a light-driven water:plastoquinone oxidoreductase that uses light energy to abstract electrons from H(2)O, generating O(2) and a proton gradient subsequently used for ATP formation. It consists of a core antenna complex that captures photons, and an electron transfer chain that converts photonic excitation into a charge separation. This subunit is found at the monomer-monomer interface and is required for correct PSII assembly and/or dimerization. This chain is Photosystem II reaction center protein L, found in Cuscuta gronovii (Common dodder).